Consider the following 61-residue polypeptide: uncharacterized protein (61 aa).

Residues 39–61 (PRPFTPGLADPRRLGPRRVQAAQ) form a disordered region.

This is an uncharacterized protein from Pan troglodytes (Chimpanzee).